Reading from the N-terminus, the 662-residue chain is Methyl-accepting chemotaxis protein TlpB (662 aa).

Residues 1-16 lie on the Cytoplasmic side of the membrane; it reads MGKFIQWIKQPSISKP. A helical membrane pass occupies residues 17–37; that stretch reads LIAAFLAVLILPVGVLAYFSY. The Extracellular portion of the chain corresponds to 38 to 281; that stretch reads QSAWNALDRE…LQDASSPVLN (244 aa). The region spanning 153-228 is the Cache domain; the sequence is SEPYTDEATG…KPGTTGSGDW (76 aa). The helical transmembrane segment at 282–302 threads the bilayer; it reads TAVIILCVSIVIGGILILYII. An HAMP domain is found at 303–355; that stretch reads RAITKPLRKLVSTSAKISSGDLTEVIDIHSKNEFGQLGESFNEMSASLRSVIG. The Cytoplasmic segment spans residues 303 to 662; the sequence is RAITKPLRKL…DITKKFKIES (360 aa). Glu-370 carries the post-translational modification Glutamate methyl ester (Glu). In terms of domain architecture, Methyl-accepting transducer spans 374–610; the sequence is SAAQTSKATE…EVSSAVEDIS (237 aa). Gln-594 is modified (glutamate methyl ester (Gln)). 2 positions are modified to glutamate methyl ester (Glu): Glu-629 and Glu-636.

Belongs to the methyl-accepting chemotaxis (MCP) protein family.

The protein resides in the cell membrane. Functionally, chemotactic-signal transducers respond to changes in the concentration of attractants and repellents in the environment, transduce a signal from the outside to the inside of the cell, and facilitate sensory adaptation through the variation of the level of methylation. All amino acids serve as attractants in B.subtilis, they appear to cause an increase in the turnover methyl groups, leading to methylation of an unidentified acceptor, while repellents have been shown to cause a decrease in methyl group turnover. The methyl groups are added by a methyltransferase and removed by a methylesterase. In Bacillus subtilis (strain 168), this protein is Methyl-accepting chemotaxis protein TlpB (tlpB).